The primary structure comprises 215 residues: Thymidylate kinase (215 aa).

Residue 11–18 (GIDGAGKS) coordinates ATP.

This sequence belongs to the thymidylate kinase family.

It carries out the reaction dTMP + ATP = dTDP + ADP. Functionally, phosphorylation of dTMP to form dTDP in both de novo and salvage pathways of dTTP synthesis. The protein is Thymidylate kinase of Nitrosomonas eutropha (strain DSM 101675 / C91 / Nm57).